Reading from the N-terminus, the 385-residue chain is MAERPRKRPCGPGEHGQRVEWRKWKQQKKEEKKKWKDLKIMKKLERQRAQEEEAKRQEEEEEAAAQRSNQGRPYTLSVALPGSILDNAQSPELRTYLAGQIARACTIFCVDEIVVFDEEGQDTKSVEGEFRGVGKKGQACVQLARILQYLECPQYLRKAFFPKHQDLQFAGILNPLDSPHHMRQDEESEFREGVVVDRPTKAGHGSLVNCGMKKEVKIDKKLDPGLRVTVRLNQQQLPECKTYKGTVVSSQDPRTKAGLYWGYTVRLASCLSAVFAEAPFQDGYDLTIGTSERGSDVASAQLPSFRHALVVFGGLQGLEAAVDADPNLEVADPSVLFDFYVNTCLSQGSRTIRTEEAILISLAALQPGLTQVGSRPASPLSGPRM.

2 disordered regions span residues 1-35 and 47-72; these read MAER…KKKW and QRAQ…NQGR. Basic and acidic residues-rich tracts occupy residues 15 to 35 and 47 to 58; these read HGQR…KKKW and QRAQEEEAKRQE. The S-adenosyl-L-methionine site is built by Arg293, Gly313, Asn342, and Thr343.

Belongs to the class IV-like SAM-binding methyltransferase superfamily. As to quaternary structure, interacts with INCA1.

The protein localises to the cytoplasm. It is found in the cytoskeleton. The protein resides in the spindle. Its subcellular location is the chromosome. It localises to the centromere. The protein localises to the kinetochore. It is found in the microtubule organizing center. The protein resides in the centrosome. It carries out the reaction uridine in 28S rRNA + S-adenosyl-L-methionine = N(3)-methyluridine in 28S rRNA + S-adenosyl-L-homocysteine + H(+). In terms of biological role, S-adenosyl-L-methionine-dependent methyltransferase that specifically methylates the N3 position of a uridine in 28S rRNA. Required for association of the centrosomes with the poles of the bipolar mitotic spindle during metaphase. Also involved in chromosome alignment. May promote centrosome maturation probably by recruiting A-kinase anchor protein AKAP9 to centrosomes in early mitosis. Binds specifically to miRNA MIR145 hairpin, regulates MIR145 expression at a postranscriptional level. The polypeptide is 28S rRNA (uridine-N(3))-methyltransferase (Mus musculus (Mouse)).